Consider the following 159-residue polypeptide: uncharacterized protein (159 aa).

In terms of domain architecture, N-acetyltransferase spans 4-153; sequence IKTDDLTHPA…HSRFLSLTLC (150 aa).

The protein belongs to the acetyltransferase family.

This is an uncharacterized protein from Escherichia coli (strain K12).